A 729-amino-acid polypeptide reads, in one-letter code: MLYKGDTLYVDWLEDGIAELVFDAPGSVNKLDTATVASLGHALDVLEKQSDLKGLLLRSEKAAFIVGADITEFLSLFQVPEEQLSQWLHFANSVFNRLEDLPVPTISAVNGYALGGGCECVLATDYRLATPDLRIGLPETKLGIMPGFGGSVRMPRMLGADSALEIIAAGKDVGADQALKIGLIDGIVKAEKLRDGAISILRQAINGDLDWKAKRQRKLEPLKLSKIEATMSFTIAKGMVMQTAGKHYPAPITAVKTIEAAARLGREEALKLENQSFVPLAHTNEARALVGIFLNDQFVKGKAKQLTKNVEMPKQAAVLGAGIMGGGIAYQSAWKGVPVIMKDINDKSLTLGMTEAAKLLNKQLERGKIDGLKLSGVISTIHPTLEYSGFDRVDVVVEAVVENPKIKKAVLAETEDKVRPDTVLASNTSTIPIGELASVLKRPENFCGMHFFNPVHRMPLVEVIRGEKTSDETIAKVVAWASKMGKTPIVVNDCPGFFVNRVLFPYFAGFSQLLRDGADFRKVDKVMEKQFGWPMGPAYLLDVVGIDTAHHAQAVMAAGFPQRMQKDYRDAIDALFDANRFGQKNGLGFWRYKEDSKGKPKKEDDTAVESLLADVSQPTRDFSDEEIIARMMIPMVNEVVRCLEEGIIASPAEADMALVYGLGFPPFHGGAFRWLDTLGSAKYLDMAQQYQQLGPLYEVPDGLRNKARHNEPYYPPVEPARPVGALKTA.

Positions 1 to 189 (MLYKGDTLYV…KIGLIDGIVK (189 aa)) are enoyl-CoA hydratase/isomerase. Asp-296 provides a ligand contact to substrate. Residues 311–729 (EMPKQAAVLG…ARPVGALKTA (419 aa)) are 3-hydroxyacyl-CoA dehydrogenase. Residues Met-324, Asp-343, 400 to 402 (VVE), Lys-407, and Ser-429 contribute to the NAD(+) site. Catalysis depends on His-450, which acts as the For 3-hydroxyacyl-CoA dehydrogenase activity. Position 453 (Asn-453) interacts with NAD(+). Substrate is bound by residues Asn-500 and Tyr-660. The interval 708–729 (RHNEPYYPPVEPARPVGALKTA) is disordered.

The protein in the N-terminal section; belongs to the enoyl-CoA hydratase/isomerase family. In the C-terminal section; belongs to the 3-hydroxyacyl-CoA dehydrogenase family. As to quaternary structure, heterotetramer of two alpha chains (FadB) and two beta chains (FadA).

It carries out the reaction a (3S)-3-hydroxyacyl-CoA + NAD(+) = a 3-oxoacyl-CoA + NADH + H(+). The enzyme catalyses a (3S)-3-hydroxyacyl-CoA = a (2E)-enoyl-CoA + H2O. It catalyses the reaction a 4-saturated-(3S)-3-hydroxyacyl-CoA = a (3E)-enoyl-CoA + H2O. The catalysed reaction is (3S)-3-hydroxybutanoyl-CoA = (3R)-3-hydroxybutanoyl-CoA. It carries out the reaction a (3Z)-enoyl-CoA = a 4-saturated (2E)-enoyl-CoA. The enzyme catalyses a (3E)-enoyl-CoA = a 4-saturated (2E)-enoyl-CoA. It participates in lipid metabolism; fatty acid beta-oxidation. Functionally, involved in the aerobic and anaerobic degradation of long-chain fatty acids via beta-oxidation cycle. Catalyzes the formation of 3-oxoacyl-CoA from enoyl-CoA via L-3-hydroxyacyl-CoA. It can also use D-3-hydroxyacyl-CoA and cis-3-enoyl-CoA as substrate. The sequence is that of Fatty acid oxidation complex subunit alpha from Enterobacter sp. (strain 638).